Reading from the N-terminus, the 350-residue chain is Induced myeloid leukemia cell differentiation protein Mcl-1 homolog (350 aa).

Residues Lys-5 and Lys-40 each participate in a glycyl lysine isopeptide (Lys-Gly) (interchain with G-Cter in ubiquitin) cross-link. The PEST-like stretch occupies residues 104–175 (CASPPEEMEG…PAEEEEDELF (72 aa)). Position 121 is a phosphoserine (Ser-121). Lys-136 is covalently cross-linked (Glycyl lysine isopeptide (Lys-Gly) (interchain with G-Cter in ubiquitin)). The disordered stretch occupies residues 148 to 170 (GEASSGPGTDGSLPSTPPPAEEE). The residue at position 159 (Ser-159) is a Phosphoserine; by GSK3-alpha and GSK3-beta. Phosphoserine is present on Ser-162. At Thr-163 the chain carries Phosphothreonine; by MAPK. Glycyl lysine isopeptide (Lys-Gly) (interchain with G-Cter in ubiquitin) cross-links involve residues Lys-194 and Lys-197. A BH3 motif is present at residues 209 to 223 (ALETLRRVGDGVQRN). Positions 252-272 (HVFSDGVTNWGRIVTLISFGA) match the BH1 motif. The BH2 motif lies at 304-319 (DWLVKQRGWDGFVEFF). A helical transmembrane segment spans residues 328–348 (IRNVLLAFAGVAGVGAGLAYL).

This sequence belongs to the Bcl-2 family. As to quaternary structure, interacts with HIF3A (via C-terminus domain). Interacts with BOK, BIK, BAX, BAK1, and TPT1. Interacts with unphosphorylated BAD. Interacts with BMF, BBC3 and PMAIP1. Interacts with BOP. Interacts with BCL2L11; may sequester BCL2L11 to prevent its pro-apoptotic activity. Interacts with GIMAP5 and HSPA8/HSC70; the interaction between HSPA8 and MCL1 is impaired in the absence of GIMAP5. Cleaved by CASP3 during apoptosis, yielding a pro-apoptotic C-terminal fragment. In terms of processing, rapidly degraded in the absence of phosphorylation in the PEST region. Post-translationally, phosphorylated on Ser-159, by GSK3, in response to IL3/interleukin-3 withdrawal. Phosphorylation at Ser-159 induces ubiquitination and proteasomal degradation, abrogating the anti-apoptotic activity. Treatment with taxol or okadaic acid induces phosphorylation on additional sites. Ubiquitinated. Ubiquitination is induced by phosphorylation at Ser-159. Deubiquitinated by USP20; leading to increased stability.

The protein localises to the membrane. It localises to the cytoplasm. Its subcellular location is the mitochondrion. The protein resides in the nucleus. It is found in the nucleoplasm. Its function is as follows. Involved in the regulation of apoptosis versus cell survival, and in the maintenance of viability but not of proliferation. Mediates its effects by interactions with a number of other regulators of apoptosis. This Felis catus (Cat) protein is Induced myeloid leukemia cell differentiation protein Mcl-1 homolog (MCL1).